A 105-amino-acid chain; its full sequence is Imizoquin biosynthesis cluster protein I (105 aa).

Over residues 1–15 the composition is skewed to polar residues; sequence MSSGEPTTMTPSPSE. Residues 1-43 are disordered; it reads MSSGEPTTMTPSPSERTPLLSNGSGGAADDGGTTVTISKPNDG.

Its pathway is secondary metabolite biosynthesis. Part of the gene cluster that mediates the biosynthesis of imizoquins A to D, tripeptide-derived alkaloids that serve a protective role against oxidative stress that are essential for normal germination. ImqB is a canonical three-module NRPS that assembles the tripeptide backbone of the imizoquins via condensation of Trp, Tyr, and Leu-derived precursors. N-methylation by imqF and phenol oxidation by imqC, followed by cyclization via the FAD-dependent oxidase imqH carry out the three-step transformation of L-tyrosine into tetrahydroisoquinoline. Importantly, this sequence requires the presence of a free amine in the tyrosine moiety, indicating that isoquinoline formation occurs prior to peptide bond formation. The imidazolidin-4-one ring of imizoquins could form following additional oxidation of the methyl-derived bridgehead carbon by imqH. Lastly, O-methylation by imqG and leucine hydroxylation by imqE complete biosynthesis of the imizoquins. This Aspergillus flavus (strain ATCC 200026 / FGSC A1120 / IAM 13836 / NRRL 3357 / JCM 12722 / SRRC 167) protein is Imizoquin biosynthesis cluster protein I.